A 549-amino-acid polypeptide reads, in one-letter code: Putative lipase ATG15 (549 aa).

The Cytoplasmic segment spans residues 1–19; sequence MKQDLYKESSPPPSTTKSK. A helical; Signal-anchor for type II membrane protein membrane pass occupies residues 20–42; that stretch reads GLYVIVAALVTTAIYLLYSQGYS. Over 43 to 549 the chain is Lumenal; it reads NTHGEKDMPS…SHTVTHVTMA (507 aa). Residues Asn204 and Asn315 are each glycosylated (N-linked (GlcNAc...) asparagine). Catalysis depends on Ser331, which acts as the Charge relay system. Asn448 carries an N-linked (GlcNAc...) asparagine glycan. A disordered region spans residues 474–510; the sequence is DDDDKDKKKKKKTSTSSSVVSKTKTSTSSTVATNTMP. A compositionally biased stretch (low complexity) spans 487–504; that stretch reads STSSSVVSKTKTSTSSTV.

The protein belongs to the AB hydrolase superfamily. Lipase family. As to quaternary structure, binds to both phosphatidylinositol (PI) and phosphatidylinositol 3,5-bisphosphate (PIP2).

Its subcellular location is the endosome. The protein localises to the multivesicular body membrane. It is found in the prevacuolar compartment membrane. It catalyses the reaction a triacylglycerol + H2O = a diacylglycerol + a fatty acid + H(+). Functionally, lipase which is essential for lysis of subvacuolar cytoplasm to vacuole targeted bodies and intravacuolar autophagic bodies. Involved in the lysis of intravacuolar multivesicular body (MVB) vesicles. The intravacuolar membrane disintegration by ATG15 is critical to life span extension. The protein is Putative lipase ATG15 (ATG15) of Yarrowia lipolytica (strain CLIB 122 / E 150) (Yeast).